We begin with the raw amino-acid sequence, 356 residues long: S-adenosylmethionine:tRNA ribosyltransferase-isomerase (356 aa).

The protein belongs to the QueA family. As to quaternary structure, monomer.

The protein resides in the cytoplasm. The catalysed reaction is 7-aminomethyl-7-carbaguanosine(34) in tRNA + S-adenosyl-L-methionine = epoxyqueuosine(34) in tRNA + adenine + L-methionine + 2 H(+). Its pathway is tRNA modification; tRNA-queuosine biosynthesis. Functionally, transfers and isomerizes the ribose moiety from AdoMet to the 7-aminomethyl group of 7-deazaguanine (preQ1-tRNA) to give epoxyqueuosine (oQ-tRNA). The protein is S-adenosylmethionine:tRNA ribosyltransferase-isomerase of Escherichia coli (strain UTI89 / UPEC).